A 165-amino-acid polypeptide reads, in one-letter code: Phosphopantetheine adenylyltransferase (165 aa).

Serine 10 serves as a coordination point for substrate. Residues serine 10 to phenylalanine 11 and histidine 18 contribute to the ATP site. 3 residues coordinate substrate: lysine 42, leucine 74, and arginine 88. Residues glycine 89–arginine 91, glutamate 99, and tyrosine 124–serine 130 each bind ATP.

This sequence belongs to the bacterial CoaD family. Homohexamer. It depends on Mg(2+) as a cofactor.

The protein localises to the cytoplasm. It catalyses the reaction (R)-4'-phosphopantetheine + ATP + H(+) = 3'-dephospho-CoA + diphosphate. The protein operates within cofactor biosynthesis; coenzyme A biosynthesis; CoA from (R)-pantothenate: step 4/5. Its function is as follows. Reversibly transfers an adenylyl group from ATP to 4'-phosphopantetheine, yielding dephospho-CoA (dPCoA) and pyrophosphate. This Halalkalibacterium halodurans (strain ATCC BAA-125 / DSM 18197 / FERM 7344 / JCM 9153 / C-125) (Bacillus halodurans) protein is Phosphopantetheine adenylyltransferase.